We begin with the raw amino-acid sequence, 241 residues long: Phosphatidylcholine synthase (241 aa).

At 1–15 (MKFFNYRRVPYAEIR) the chain is on the cytoplasmic side. Residues 16–36 (AFSVHILTASGSFLAFLGVVA) form a helical membrane-spanning segment. Residues 37–41 (AAEHR) lie on the Periplasmic side of the membrane. Residues 42–62 (FVDMFWWLGLALLVDGIDGPI) traverse the membrane as a helical segment. Topologically, residues 63-76 (ARKVQVKEVLPNWS) are cytoplasmic. The helical transmembrane segment at 77 to 97 (GDTLDNVIDYVTYVLLPAFAL) threads the bilayer. The Periplasmic portion of the chain corresponds to 98–100 (YQS). The chain crosses the membrane as a helical span at residues 101-121 (GMIGEPWSFVAAGAIVVSSAI). At 122–133 (YYADMGMKTDEY) the chain is on the cytoplasmic side. The helical transmembrane segment at 134 to 154 (FFSGFPVVWNMVVFTLFVIQA) threads the bilayer. Topologically, residues 155 to 156 (SE) are periplasmic. Residues 157-177 (VTASIVVFLSVILTFLPINFL) traverse the membrane as a helical segment. At 178–187 (HPVRVKRLRP) the chain is on the cytoplasmic side. The helical transmembrane segment at 188–208 (LNLGIFLVWSVLGMYALLLHF) threads the bilayer. Over 209 to 211 (ETP) the chain is Periplasmic. A helical membrane pass occupies residues 212–232 (PWVVVGVVATGLYLYVIGFIL). Topologically, residues 233 to 241 (QIFPKLGRA) are cytoplasmic.

Belongs to the CDP-alcohol phosphatidyltransferase class-I family. The cofactor is Mn(2+).

It localises to the cell inner membrane. The catalysed reaction is a CDP-1,2-diacyl-sn-glycerol + choline = a 1,2-diacyl-sn-glycero-3-phosphocholine + CMP + H(+). Activated by CDP-diacylglycerol especially in the presence of Triton X-100 (0.1% w/v) at concentrations where micelles are formed. Maximal activation by Triton X-100 at 0.2% w/v, but higher concentrations become inhibitory. Inhibited by EDTA and high concentrations of choline. Functionally, condenses choline with CDP-diglyceride to produce phosphatidylcholine and CMP. This is Phosphatidylcholine synthase (pcs) from Rhizobium meliloti (strain 1021) (Ensifer meliloti).